Here is a 247-residue protein sequence, read N- to C-terminus: MFKAIVSADTLQETLDSVSVLVDECKIHLDDDTLSIRAVDPASVGMVDLDLAATAFESYEADGGLIGVNLSRLEDIAGMADAGQLIQLELDEETRKLHIQIDGLEYTLALIDPDSIRQEPDIPDLDLPAHVAIEGRDIDRAVTAADMVSDHIALGVDTGDDLFYVNAEGDTDDVHLELAPDQLIDLDAGDAHSLFSLDYLKDMNKAIPTTAEVELELGDEFPIKLHFDIADAQGHVTYMLAPRIQSN.

This sequence belongs to the PCNA family. Homotrimer. The subunits circularize to form a toroid; DNA passes through its center. Replication factor C (RFC) is required to load the toroid on the DNA.

Functionally, sliding clamp subunit that acts as a moving platform for DNA processing. Responsible for tethering the catalytic subunit of DNA polymerase and other proteins to DNA during high-speed replication. This is DNA polymerase sliding clamp from Halobacterium salinarum (strain ATCC 29341 / DSM 671 / R1).